A 96-amino-acid chain; its full sequence is Co-chaperonin GroES (96 aa).

This sequence belongs to the GroES chaperonin family. In terms of assembly, heptamer of 7 subunits arranged in a ring. Interacts with the chaperonin GroEL.

The protein localises to the cytoplasm. Functionally, together with the chaperonin GroEL, plays an essential role in assisting protein folding. The GroEL-GroES system forms a nano-cage that allows encapsulation of the non-native substrate proteins and provides a physical environment optimized to promote and accelerate protein folding. GroES binds to the apical surface of the GroEL ring, thereby capping the opening of the GroEL channel. The protein is Co-chaperonin GroES of Shewanella piezotolerans (strain WP3 / JCM 13877).